A 656-amino-acid chain; its full sequence is Methionine--tRNA ligase (656 aa).

The 'HIGH' region signature appears at 13–23; that stretch reads YYPSGNLHIGH. The 'KMSKS' region motif lies at 308–312; that stretch reads KMSKS. Lysine 311 is a binding site for ATP. A tRNA-binding domain is found at 556–656; the sequence is DFDKVEIKAA…SAIPNGAVIK (101 aa).

Belongs to the class-I aminoacyl-tRNA synthetase family. MetG type 2B subfamily. Homodimer.

It is found in the cytoplasm. The catalysed reaction is tRNA(Met) + L-methionine + ATP = L-methionyl-tRNA(Met) + AMP + diphosphate. In terms of biological role, is required not only for elongation of protein synthesis but also for the initiation of all mRNA translation through initiator tRNA(fMet) aminoacylation. This is Methionine--tRNA ligase from Staphylococcus epidermidis (strain ATCC 12228 / FDA PCI 1200).